A 426-amino-acid chain; its full sequence is Mediator of RNA polymerase II transcription subunit 4 (426 aa).

Residues 1–56 form a disordered region; sequence MLQHQIVQSPARLGLTGPGSPSVQNPTPTRHGHPTSSSSSQSQHQQIQQQPNLLPS. Residues 19–28 are compositionally biased toward polar residues; that stretch reads GSPSVQNPTP. Over residues 36–56 the composition is skewed to low complexity; the sequence is SSSSSQSQHQQIQQQPNLLPS. A coiled-coil region spans residues 160–212; it reads TELQEILDLQDAKQKVAREIKSKDSSLLAFANKLKDAERVLDMLVDDYSDYRK. Disordered stretches follow at residues 214–236 and 373–426; these read KRSKIEEDDEDNDNESSSSSTTV and IAAP…DDED. Positions 406-426 are enriched in acidic residues; it reads ILEDDDSSDYSSDDASSDDED.

It belongs to the Mediator complex subunit 4 family. As to quaternary structure, component of the Mediator complex.

The protein resides in the nucleus. Functionally, component of the Mediator complex, a coactivator involved in the regulated transcription of nearly all RNA polymerase II-dependent genes. Mediator functions as a bridge to convey information from gene-specific regulatory proteins to the basal RNA polymerase II transcription machinery. The Mediator complex, having a compact conformation in its free form, is recruited to promoters by direct interactions with regulatory proteins and serves for the assembly of a functional preinitiation complex with RNA polymerase II and the general transcription factors. This Arabidopsis thaliana (Mouse-ear cress) protein is Mediator of RNA polymerase II transcription subunit 4 (MED4).